The primary structure comprises 158 residues: MQGRLSAWLVKHELVHRSLGFDYQGIETLQIKPEDWHSIAVISYVYGYNYLRSQCAYDVAPGGLLASVYHLTRIQYGVDQPEEVCIKVFAKRRNPRIPSVFWIWKSADFQERESYDMLGISYDNHPRLKRILMPESWIGWPLRKDYIAPNFYEIQDAH.

This sequence belongs to the complex I 30 kDa subunit family. NDH is composed of at least 16 different subunits, 5 of which are encoded in the nucleus.

The protein localises to the plastid. It localises to the chloroplast thylakoid membrane. It catalyses the reaction a plastoquinone + NADH + (n+1) H(+)(in) = a plastoquinol + NAD(+) + n H(+)(out). The catalysed reaction is a plastoquinone + NADPH + (n+1) H(+)(in) = a plastoquinol + NADP(+) + n H(+)(out). NDH shuttles electrons from NAD(P)H:plastoquinone, via FMN and iron-sulfur (Fe-S) centers, to quinones in the photosynthetic chain and possibly in a chloroplast respiratory chain. The immediate electron acceptor for the enzyme in this species is believed to be plastoquinone. Couples the redox reaction to proton translocation, and thus conserves the redox energy in a proton gradient. This is NAD(P)H-quinone oxidoreductase subunit J, chloroplastic from Illicium oligandrum (Star anise).